Consider the following 452-residue polypeptide: Pup--protein ligase (452 aa).

Mg(2+) is bound at residue glutamate 9. Position 53 (arginine 53) interacts with ATP. Tyrosine 55 contributes to the Mg(2+) binding site. Catalysis depends on aspartate 57, which acts as the Proton acceptor. Glutamate 63 is a Mg(2+) binding site. Threonine 66 and tryptophan 419 together coordinate ATP.

This sequence belongs to the Pup ligase/Pup deamidase family. Pup-conjugating enzyme subfamily.

The catalysed reaction is ATP + [prokaryotic ubiquitin-like protein]-L-glutamate + [protein]-L-lysine = ADP + phosphate + N(6)-([prokaryotic ubiquitin-like protein]-gamma-L-glutamyl)-[protein]-L-lysine.. It participates in protein degradation; proteasomal Pup-dependent pathway. Its pathway is protein modification; protein pupylation. In terms of biological role, catalyzes the covalent attachment of the prokaryotic ubiquitin-like protein modifier Pup to the proteasomal substrate proteins, thereby targeting them for proteasomal degradation. This tagging system is termed pupylation. The ligation reaction involves the side-chain carboxylate of the C-terminal glutamate of Pup and the side-chain amino group of a substrate lysine. The chain is Pup--protein ligase from Streptosporangium roseum (strain ATCC 12428 / DSM 43021 / JCM 3005 / KCTC 9067 / NCIMB 10171 / NRRL 2505 / NI 9100).